Consider the following 61-residue polypeptide: Small ribosomal subunit protein uS14 (61 aa).

Zn(2+)-binding residues include Cys24, Cys27, Cys40, and Cys43.

Belongs to the universal ribosomal protein uS14 family. Zinc-binding uS14 subfamily. As to quaternary structure, part of the 30S ribosomal subunit. Contacts proteins S3 and S10. Zn(2+) serves as cofactor.

Functionally, binds 16S rRNA, required for the assembly of 30S particles and may also be responsible for determining the conformation of the 16S rRNA at the A site. The polypeptide is Small ribosomal subunit protein uS14 (Mycoplasma genitalium (strain ATCC 33530 / DSM 19775 / NCTC 10195 / G37) (Mycoplasmoides genitalium)).